The following is a 218-amino-acid chain: ATP-dependent Clp protease proteolytic subunit 2 (218 aa).

Residue Ser-114 is the Nucleophile of the active site. Residue His-139 is part of the active site.

The protein belongs to the peptidase S14 family. In terms of assembly, fourteen ClpP subunits assemble into 2 heptameric rings which stack back to back to give a disk-like structure with a central cavity, resembling the structure of eukaryotic proteasomes.

It is found in the cytoplasm. The catalysed reaction is Hydrolysis of proteins to small peptides in the presence of ATP and magnesium. alpha-casein is the usual test substrate. In the absence of ATP, only oligopeptides shorter than five residues are hydrolyzed (such as succinyl-Leu-Tyr-|-NHMec, and Leu-Tyr-Leu-|-Tyr-Trp, in which cleavage of the -Tyr-|-Leu- and -Tyr-|-Trp bonds also occurs).. In terms of biological role, cleaves peptides in various proteins in a process that requires ATP hydrolysis. Has a chymotrypsin-like activity. Plays a major role in the degradation of misfolded proteins. Probably partially responsible for degradation of ECF sigma factor SigR prime. The protein is ATP-dependent Clp protease proteolytic subunit 2 of Streptomyces coelicolor (strain ATCC BAA-471 / A3(2) / M145).